The primary structure comprises 226 residues: Transcriptional regulatory protein DpiA (226 aa).

One can recognise a Response regulatory domain in the interval threonine 6–arginine 122. A 4-aspartylphosphate modification is found at aspartate 57. Residues alanine 180 to glutamate 199 constitute a DNA-binding region (H-T-H motif).

In terms of processing, phosphorylated and activated by DpiB.

It is found in the cytoplasm. Member of the two-component regulatory system DpiA/DpiB, which is essential for expression of citrate-specific fermentation genes and genes involved in plasmid inheritance. Could be involved in response to both the presence of citrate and external redox conditions. The sequence is that of Transcriptional regulatory protein DpiA (dpiA) from Escherichia coli O157:H7.